Here is a 468-residue protein sequence, read N- to C-terminus: Dimethylamine methyltransferase MtbB1 (468 aa).

Residue pyrrolysine 356 is a non-standard amino acid, pyrrolysine.

The protein belongs to the dimethylamine methyltransferase family.

It carries out the reaction Co(I)-[dimethylamine-specific corrinoid protein] + dimethylamine + H(+) = methyl-Co(III)-[dimethylamine-specific corrinoid protein] + methylamine. It functions in the pathway one-carbon metabolism; methanogenesis from dimethylamine. Its function is as follows. Catalyzes the transfer of a methyl group from dimethylamine to the corrinoid cofactor of MtbC. In Methanosarcina mazei (strain ATCC BAA-159 / DSM 3647 / Goe1 / Go1 / JCM 11833 / OCM 88) (Methanosarcina frisia), this protein is Dimethylamine methyltransferase MtbB1 (mtbB1).